The sequence spans 552 residues: Cytochrome c oxidase subunit 1 (552 aa).

Residues Val35 to Ala55 traverse the membrane as a helical segment. His82 is a binding site for Fe(II)-heme a. Transmembrane regions (helical) follow at residues Ile85 to Pro105, Ala120 to Gly140, Trp164 to Val184, Leu211 to Ile231, Leu252 to Met272, and Ile284 to Val304. Residues His258 and Tyr262 each coordinate Cu cation. The 1'-histidyl-3'-tyrosine (His-Tyr) cross-link spans His258–Tyr262. Cu cation contacts are provided by His307 and His308. The next 5 helical transmembrane spans lie at Phe321–Val341, Met355–Leu375, Val390–Ile410, Leu426–His446, and Ile470–Ile490. His393 contacts heme a3. His395 provides a ligand contact to Fe(II)-heme a.

This sequence belongs to the heme-copper respiratory oxidase family. The cofactor is Cu(2+). Heme serves as cofactor.

Its subcellular location is the cell membrane. The catalysed reaction is 4 Fe(II)-[cytochrome c] + O2 + 8 H(+)(in) = 4 Fe(III)-[cytochrome c] + 2 H2O + 4 H(+)(out). It functions in the pathway energy metabolism; oxidative phosphorylation. In terms of biological role, cytochrome c oxidase is the component of the respiratory chain that catalyzes the reduction of oxygen to water. Subunits 1-3 form the functional core of the enzyme complex. CO I is the catalytic subunit of the enzyme. Electrons originating in cytochrome c are transferred via the copper A center of subunit 2 and heme A of subunit 1 to the bimetallic center formed by heme A3 and copper B. In Thermostichus vulcanus (Synechococcus vulcanus), this protein is Cytochrome c oxidase subunit 1 (ctaD).